The sequence spans 131 residues: Small ribosomal subunit protein uS9 (131 aa).

This sequence belongs to the universal ribosomal protein uS9 family.

The chain is Small ribosomal subunit protein uS9 from Actinobacillus succinogenes (strain ATCC 55618 / DSM 22257 / CCUG 43843 / 130Z).